The chain runs to 145 residues: MGSVPTVIPGIVHCWMIHCLIGPFLFAIIYWSIFIEGMFFPQKYLDCQSVINLLCGSNQQKRIFKEKLRIYQVHIQEKIGCSKFNTLLLIYQLGSRHKINRQINDLLCNLCSKNYMIMLLYAEIIIYSSFSCVLSATIFLRGFLL.

2 consecutive transmembrane segments (helical) span residues 20 to 40 and 116 to 136; these read LIGP…GMFF and MIML…VLSA.

It localises to the membrane. This is an uncharacterized protein from Saccharomyces cerevisiae (strain ATCC 204508 / S288c) (Baker's yeast).